We begin with the raw amino-acid sequence, 302 residues long: Olfactory receptor 51H1 (302 aa).

Residues 1-27 (MTNLNASQANHRNFILTGIPGTPDKNP) lie on the Extracellular side of the membrane. Asn5 carries an N-linked (GlcNAc...) asparagine glycan. Residues 28 to 48 (WLAFPLGFLYTLTLLGNGTIL) traverse the membrane as a helical segment. Residues 49 to 56 (AVIKVEPS) are Cytoplasmic-facing. Residues 57-77 (LHEPTYYFLSILALTDVSLSM) traverse the membrane as a helical segment. At 78 to 101 (STLPSMLSIYWFNAPQIVFDACIM) the chain is on the extracellular side. Cysteines 99 and 191 form a disulfide. The helical transmembrane segment at 102–122 (QMFFIHVFGIVESGVLVSMAF) threads the bilayer. Topologically, residues 123 to 141 (DRFVAIRNPLHYVSILTHD) are cytoplasmic. The helical transmembrane segment at 142-162 (VIRKTGIAVLTRAVCVVFPVP) threads the bilayer. Residues 163–198 (FLIKCLPFCHSNVLSHSYCLHQNMMRLACASTRINS) lie on the Extracellular side of the membrane. The chain crosses the membrane as a helical span at residues 199–219 (LYGLIVVIFTLGLDVLLTLLS). Residues 220–239 (YVLTLKTVLGIVSRGERLKT) lie on the Cytoplasmic side of the membrane. The helical transmembrane segment at 240–260 (LSTCLSHMSTVLLFYVPFMGA) threads the bilayer. Residues 261-276 (ASMIHRFWEHLSPVVH) are Extracellular-facing. Residues 277–297 (MVMADIYLLLPPVLNPIVYSV) form a helical membrane-spanning segment. The Cytoplasmic segment spans residues 298–302 (KTKQI).

This sequence belongs to the G-protein coupled receptor 1 family.

It is found in the cell membrane. Functionally, odorant receptor. The protein is Olfactory receptor 51H1 (OR51H1) of Homo sapiens (Human).